The chain runs to 238 residues: DNA repair protein RecO (238 aa).

The protein belongs to the RecO family.

In terms of biological role, involved in DNA repair and RecF pathway recombination. The protein is DNA repair protein RecO of Aliivibrio fischeri (strain ATCC 700601 / ES114) (Vibrio fischeri).